The chain runs to 131 residues: MSWQAYVDEHLMCEIEGHHLTSAAIVGHDGAVWAQSTAFPQFKTEEMTNIMKDFDEPGFLAPTGLFLGPTKYMVIQGEPGAVIRGKKGSGGITVKKTGQALVIGIYDEPMTPGQCNMVVERLGDYLLEQGM.

An intrachain disulfide couples Cys13 to Cys115. An Involved in PIP2 interaction motif is present at residues 81–97; that stretch reads AVIRGKKGSGGITVKKT. A Phosphothreonine modification is found at Thr111.

It belongs to the profilin family. In terms of assembly, occurs in many kinds of cells as a complex with monomeric actin in a 1:1 ratio. Phosphorylated by MAP kinases.

The protein resides in the cytoplasm. The protein localises to the cytoskeleton. In terms of biological role, binds to actin and affects the structure of the cytoskeleton. At high concentrations, profilin prevents the polymerization of actin, whereas it enhances it at low concentrations. This is Profilin-9 from Zea mays (Maize).